Reading from the N-terminus, the 114-residue chain is UPF0342 protein LSEI_1724 (114 aa).

The protein belongs to the UPF0342 family.

The protein is UPF0342 protein LSEI_1724 of Lacticaseibacillus paracasei (strain ATCC 334 / BCRC 17002 / CCUG 31169 / CIP 107868 / KCTC 3260 / NRRL B-441) (Lactobacillus paracasei).